We begin with the raw amino-acid sequence, 143 residues long: Endoribonuclease YbeY (143 aa).

Zn(2+)-binding residues include H109, H113, and H119.

It belongs to the endoribonuclease YbeY family. It depends on Zn(2+) as a cofactor.

It is found in the cytoplasm. Single strand-specific metallo-endoribonuclease involved in late-stage 70S ribosome quality control and in maturation of the 3' terminus of the 16S rRNA. The polypeptide is Endoribonuclease YbeY (Neorickettsia sennetsu (strain ATCC VR-367 / Miyayama) (Ehrlichia sennetsu)).